We begin with the raw amino-acid sequence, 145 residues long: Large ribosomal subunit protein uL15 (145 aa).

The disordered stretch occupies residues 1–57 (MKLNDLSPAPGSRREKHRPGRGIGSGLGKTGGRGHKGQTSRSGGTIAPGFEGGQQPL). Over residues 21–31 (RGIGSGLGKTG) the composition is skewed to gly residues.

It belongs to the universal ribosomal protein uL15 family. Part of the 50S ribosomal subunit.

Binds to the 23S rRNA. In Pseudomonas fluorescens (strain SBW25), this protein is Large ribosomal subunit protein uL15.